The sequence spans 818 residues: Structure-specific endonuclease subunit SLX4 (818 aa).

Disordered regions lie at residues 1 to 39 (MSFLNSSRRRTRSPSPGQIFAPSATPIVIDSSPSVPSAS), 53 to 151 (RDPY…SSSN), 279 to 324 (FSEG…HQDS), 413 to 437 (NAQFPRKNSRPQKTRSPCSNPKTSK), and 587 to 712 (MLPA…MASE). Over residues 28 to 39 (VIDSSPSVPSAS) the composition is skewed to low complexity. Over residues 90–103 (PSERTKDAHGKDRF) the composition is skewed to basic and acidic residues. A compositionally biased stretch (low complexity) spans 306–316 (TTSTTITSLST). A compositionally biased stretch (polar residues) spans 426–437 (TRSPCSNPKTSK). Over residues 604 to 618 (QMSKRDTIKSRDIRA) the composition is skewed to basic and acidic residues. Composition is skewed to polar residues over residues 621–640 (SRSNSNHIPGLVSSTSQNTG), 652–672 (SSKSNDIGTTQGSPLLTTQSV), and 696–712 (SLASNTPSSSTRTMASE).

Belongs to the SLX4 family. As to quaternary structure, forms a heterodimer with SLX1. Phosphorylated in response to DNA damage.

The protein localises to the nucleus. In terms of biological role, regulatory subunit of the SLX1-SLX4 structure-specific endonuclease that resolves DNA secondary structures generated during DNA repair and recombination. Has endonuclease activity towards branched DNA substrates, introducing single-strand cuts in duplex DNA close to junctions with ss-DNA. In Uncinocarpus reesii (strain UAMH 1704), this protein is Structure-specific endonuclease subunit SLX4.